The chain runs to 315 residues: tRNA pseudouridine synthase B (315 aa).

Asp-54 functions as the Nucleophile in the catalytic mechanism.

This sequence belongs to the pseudouridine synthase TruB family. Type 1 subfamily.

It catalyses the reaction uridine(55) in tRNA = pseudouridine(55) in tRNA. Its function is as follows. Responsible for synthesis of pseudouridine from uracil-55 in the psi GC loop of transfer RNAs. In Agrobacterium fabrum (strain C58 / ATCC 33970) (Agrobacterium tumefaciens (strain C58)), this protein is tRNA pseudouridine synthase B.